Here is a 481-residue protein sequence, read N- to C-terminus: Aspartyl/glutamyl-tRNA(Asn/Gln) amidotransferase subunit B (481 aa).

The protein belongs to the GatB/GatE family. GatB subfamily. Heterotrimer of A, B and C subunits.

The catalysed reaction is L-glutamyl-tRNA(Gln) + L-glutamine + ATP + H2O = L-glutaminyl-tRNA(Gln) + L-glutamate + ADP + phosphate + H(+). The enzyme catalyses L-aspartyl-tRNA(Asn) + L-glutamine + ATP + H2O = L-asparaginyl-tRNA(Asn) + L-glutamate + ADP + phosphate + 2 H(+). In terms of biological role, allows the formation of correctly charged Asn-tRNA(Asn) or Gln-tRNA(Gln) through the transamidation of misacylated Asp-tRNA(Asn) or Glu-tRNA(Gln) in organisms which lack either or both of asparaginyl-tRNA or glutaminyl-tRNA synthetases. The reaction takes place in the presence of glutamine and ATP through an activated phospho-Asp-tRNA(Asn) or phospho-Glu-tRNA(Gln). In Pseudomonas aeruginosa (strain LESB58), this protein is Aspartyl/glutamyl-tRNA(Asn/Gln) amidotransferase subunit B.